The primary structure comprises 434 residues: 3-phosphoshikimate 1-carboxyvinyltransferase (434 aa).

3-phosphoshikimate is bound by residues K22, S23, and R27. K22 serves as a coordination point for phosphoenolpyruvate. G93 and R121 together coordinate phosphoenolpyruvate. Positions 168, 169, 170, 199, 320, and 347 each coordinate 3-phosphoshikimate. A phosphoenolpyruvate-binding site is contributed by Q170. D320 acts as the Proton acceptor in catalysis. Positions 351, 395, and 420 each coordinate phosphoenolpyruvate.

Belongs to the EPSP synthase family. As to quaternary structure, monomer.

It is found in the cytoplasm. The enzyme catalyses 3-phosphoshikimate + phosphoenolpyruvate = 5-O-(1-carboxyvinyl)-3-phosphoshikimate + phosphate. It participates in metabolic intermediate biosynthesis; chorismate biosynthesis; chorismate from D-erythrose 4-phosphate and phosphoenolpyruvate: step 6/7. Its function is as follows. Catalyzes the transfer of the enolpyruvyl moiety of phosphoenolpyruvate (PEP) to the 5-hydroxyl of shikimate-3-phosphate (S3P) to produce enolpyruvyl shikimate-3-phosphate and inorganic phosphate. This chain is 3-phosphoshikimate 1-carboxyvinyltransferase, found in Cupriavidus necator (strain ATCC 17699 / DSM 428 / KCTC 22496 / NCIMB 10442 / H16 / Stanier 337) (Ralstonia eutropha).